Reading from the N-terminus, the 119-residue chain is uncharacterized protein (119 aa).

Residue C13 is part of the active site.

It belongs to the ArsC family.

This is an uncharacterized protein from Escherichia coli (strain K12).